Consider the following 522-residue polypeptide: MAFLDNPTIILAHIRQSHVTSDDTGMCEMVLIDHDVDLEKIHPPSMPGDSGSEIQGSNGETQGYVYAQSVDITSSWDFGIRRRSNTAQRLERLRKERQNQIKCKNIQWKERNSKQSAQELKSLFEKKSLKEKPPNSGKQSILSVRLEQCPLQLNNPFNEYSKFDGKGHVGTTATKKIDVYLPLHSSQDRLLPMTVVTMASARVQDLIGLICWQYTSEGREPKLNDNVSAYCLHIAEDDGEVDTDFPPLDSNEPIHKFGFSTLALVEKYSSPGLTSKESLFVRINAAHGFSLIQVDNTKVTMKEILLKAVKRRKGSQKISGPQYRLEKQSEPNVAVDLESTLESQSAWEFCLVRENSSRADGVFEEDSQIDIATVQDMLSSHHYKSFKVSMIHRLRFTTDVQLGISGDKVEIDPVTSQKASTKFWIKQKPISIDSDLLCACDLAEEKSPSHAIFKLTYLSNHDYKHLYFESDAATVNEIVLKVNYILESRASTARADYFAQKQRKLNRRTSFSFQKEKKSGQQ.

At Ala-2 the chain carries N-acetylalanine. The interaction with MAP3K2 stretch occupies residues 2-184 (AFLDNPTIIL…KKIDVYLPLH (183 aa)). Residues 2–267 (AFLDNPTIIL…GFSTLALVEK (266 aa)) are interaction with NBN. Phosphothreonine is present on Thr-86. A phosphoserine mark is found at Ser-128, Ser-186, Ser-315, and Ser-356. Residues 139 to 267 (QSILSVRLEQ…GFSTLALVEK (129 aa)) form the CRIM domain. An SIN1-type RBD region spans residues 279 to 353 (LFVRINAAHG…QSAWEFCLVR (75 aa)). The region spanning 382 to 487 (HYKSFKVSMI…IVLKVNYILE (106 aa)) is the SIN1-type PH domain. Arg-393 is an a 1,2-diacyl-sn-glycero-3-phospho-(1D-myo-inositol-3,4,5-trisphosphate) binding site. Thr-398 is modified (phosphothreonine). A 1,2-diacyl-sn-glycero-3-phospho-(1D-myo-inositol-3,4,5-trisphosphate)-binding residues include Lys-428 and Lys-464. The tract at residues 468-522 (FESDAATVNEIVLKVNYILESRASTARADYFAQKQRKLNRRTSFSFQKEKKSGQQ) is interaction with ATF2. Ser-510 bears the Phosphoserine mark.

It belongs to the SIN1 family. In terms of assembly, component of the mechanistic target of rapamycin complex 2 (mTORC2), consisting in two heterotretramers composed of MTOR, MLST8, RICTOR and MAPKAP1/SIN1. The mTORC2 core complex associates with PRR5/PROTOR1 and/or PRR5L/PROTOR2. Contrary to mTORC1, mTORC2 does not bind to and is not sensitive to FKBP12-rapamycin. Interacts with MAP3K2. Interacts with ATF2. Interacts with MAPK8. Interacts with GTP-bound HRAS and KRAS; inhibiting their activity. Interacts with IFNAR2. Phosphorylation at Ser-128 by PKC promotes relocalization to the perinuclear region, where the mTORC2 complex specifically mediates phosphorylation of SGK1. Phosphorylated at Thr-86 by AKT1 or RPS6KB1 in the presence of growth factors; the effect of this phosphorylation is however unclear. According to two studies, phosphorylation at Thr-86 by AKT1 is part of a positive feedback loop that increases mTORC2 activation. According to another study, phosphorylation at Thr-86 and Thr-398 by RPS6KB1 promotes dissociation from the mTORC2 complex, leading to inhibit mTORC2 signaling.

Its subcellular location is the cell membrane. The protein localises to the endoplasmic reticulum membrane. The protein resides in the early endosome membrane. It is found in the late endosome membrane. It localises to the lysosome membrane. Its subcellular location is the golgi apparatus membrane. The protein localises to the mitochondrion outer membrane. The protein resides in the cytoplasm. It is found in the perinuclear region. It localises to the nucleus. Phosphatidylinositol 3,4,5-trisphosphate (PI(3,4,5)P3) promotes MTOR activation by relieving MAPKAP1/SIN1-mediated inhibition of MTOR that takes place in absence of PI(3,4,5)P3. Its function is as follows. Component of the mechanistic target of rapamycin complex 2 (mTORC2), which transduces signals from growth factors to pathways involved in proliferation, cytoskeletal organization, lipogenesis and anabolic output. In response to growth factors, mTORC2 phosphorylates and activates AGC protein kinase family members, including AKT (AKT1, AKT2 and AKT3), PKC (PRKCA, PRKCB and PRKCE) and SGK1. In contrast to mTORC1, mTORC2 is nutrient-insensitive. Within the mTORC2 complex, MAPKAP1/SIN1 acts as a substrate adapter which recognizes and binds AGC protein kinase family members for phosphorylation by MTOR. mTORC2 plays a critical role in AKT1 activation by mediating phosphorylation of different sites depending on the context, such as 'Thr-450', 'Ser-473', 'Ser-477' or 'Thr-479', facilitating the phosphorylation of the activation loop of AKT1 on 'Thr-308' by PDPK1/PDK1 which is a prerequisite for full activation. mTORC2 catalyzes the phosphorylation of SGK1 at 'Ser-422' and of PRKCA on 'Ser-657'. The mTORC2 complex also phosphorylates various proteins involved in insulin signaling, such as FBXW8 and IGF2BP1. mTORC2 acts upstream of Rho GTPases to regulate the actin cytoskeleton, probably by activating one or more Rho-type guanine nucleotide exchange factors. mTORC2 promotes the serum-induced formation of stress-fibers or F-actin. MAPKAP1 inhibits MAP3K2 by preventing its dimerization and autophosphorylation. Inhibits HRAS and KRAS independently of mTORC2 complex. Enhances osmotic stress-induced phosphorylation of ATF2 and ATF2-mediated transcription. Involved in ciliogenesis, regulates cilia length through its interaction with CCDC28B independently of mTORC2 complex. This chain is Target of rapamycin complex 2 subunit MAPKAP1 (MAPKAP1), found in Bos taurus (Bovine).